A 200-amino-acid polypeptide reads, in one-letter code: MEALSQIEGRAIPYGAKNVDTDVIVPAHWLKTITREGLGRGAFETLREVPDNIFDSEEFAGAPILIAGDNFGCGSSREHAAWALLDLGIRAVIAPSFSDIFSSNAFKNGIVTVVLSQYEVDRLMEVAQSDPIAVDLETQTVVTPFQDRFPFEIDPFRKHCLLNGLDEVGLTLTRDAAIADYESRQKTQTPWLTTGTERAA.

Belongs to the LeuD family. LeuD type 1 subfamily. As to quaternary structure, heterodimer of LeuC and LeuD.

It carries out the reaction (2R,3S)-3-isopropylmalate = (2S)-2-isopropylmalate. It participates in amino-acid biosynthesis; L-leucine biosynthesis; L-leucine from 3-methyl-2-oxobutanoate: step 2/4. Functionally, catalyzes the isomerization between 2-isopropylmalate and 3-isopropylmalate, via the formation of 2-isopropylmaleate. The protein is 3-isopropylmalate dehydratase small subunit of Erythrobacter litoralis (strain HTCC2594).